The chain runs to 194 residues: uncharacterized protein (194 aa).

The signal sequence occupies residues 1 to 22 (MNKVTKTAIAGLLALFAGNAAA). C38 and C78 are oxidised to a cystine.

This sequence belongs to the fimbrial protein family.

It localises to the fimbrium. Its function is as follows. Part of the yraHIJK fimbrial operon. Could contribute to adhesion to various surfaces in specific environmental niches. Increases adhesion to eukaryotic T24 bladder epithelial cells in the absence of fim operon. This is an uncharacterized protein from Escherichia coli (strain K12).